A 202-amino-acid polypeptide reads, in one-letter code: Large ribosomal subunit protein bL17 (202 aa).

The tract at residues 132–202 (DAAQKAASAG…TEVEKADDDK (71 aa)) is disordered. Over residues 134–168 (AQKAASAGAQEVTAAAAPQAAVEPEAVETEASAET) the composition is skewed to low complexity. Residues 169 to 193 (AEAEVETAEVEAVDEASAEEADEAT) are compositionally biased toward acidic residues.

It belongs to the bacterial ribosomal protein bL17 family. Part of the 50S ribosomal subunit. Contacts protein L32.

This Mycolicibacterium vanbaalenii (strain DSM 7251 / JCM 13017 / BCRC 16820 / KCTC 9966 / NRRL B-24157 / PYR-1) (Mycobacterium vanbaalenii) protein is Large ribosomal subunit protein bL17.